The chain runs to 109 residues: Spermidine export protein MdtI (109 aa).

The next 4 membrane-spanning stretches (helical) occupy residues 6 to 26 (FYPI…NILL), 36 to 56 (WLGI…AQAV), 64 to 84 (AYAL…WILF), and 88 to 108 (LNYK…MIKL).

It belongs to the drug/metabolite transporter (DMT) superfamily. Small multidrug resistance (SMR) (TC 2.A.7.1) family. MdtI subfamily. In terms of assembly, forms a complex with MdtJ.

The protein resides in the cell inner membrane. In terms of biological role, catalyzes the excretion of spermidine. This chain is Spermidine export protein MdtI, found in Yersinia pseudotuberculosis serotype O:1b (strain IP 31758).